The following is a 302-amino-acid chain: Aspartate carbamoyltransferase catalytic subunit (302 aa).

Carbamoyl phosphate is bound by residues Arg-53 and Thr-54. Lys-82 contributes to the L-aspartate binding site. Positions 103, 131, and 134 each coordinate carbamoyl phosphate. Arg-164 and Arg-223 together coordinate L-aspartate. Carbamoyl phosphate is bound by residues Leu-260 and Pro-261.

Belongs to the aspartate/ornithine carbamoyltransferase superfamily. ATCase family. In terms of assembly, heterooligomer of catalytic and regulatory chains.

The enzyme catalyses carbamoyl phosphate + L-aspartate = N-carbamoyl-L-aspartate + phosphate + H(+). Its pathway is pyrimidine metabolism; UMP biosynthesis via de novo pathway; (S)-dihydroorotate from bicarbonate: step 2/3. Catalyzes the condensation of carbamoyl phosphate and aspartate to form carbamoyl aspartate and inorganic phosphate, the committed step in the de novo pyrimidine nucleotide biosynthesis pathway. The protein is Aspartate carbamoyltransferase catalytic subunit of Methanococcus maripaludis (strain DSM 14266 / JCM 13030 / NBRC 101832 / S2 / LL).